The sequence spans 318 residues: 4-hydroxy-3-methylbut-2-enyl diphosphate reductase (318 aa).

Cys-21 provides a ligand contact to [4Fe-4S] cluster. (2E)-4-hydroxy-3-methylbut-2-enyl diphosphate-binding residues include His-50 and His-83. Dimethylallyl diphosphate is bound by residues His-50 and His-83. 2 residues coordinate isopentenyl diphosphate: His-50 and His-83. Cys-105 is a binding site for [4Fe-4S] cluster. His-133 contacts (2E)-4-hydroxy-3-methylbut-2-enyl diphosphate. Residue His-133 participates in dimethylallyl diphosphate binding. His-133 provides a ligand contact to isopentenyl diphosphate. Residue Glu-135 is the Proton donor of the active site. Residue Thr-176 coordinates (2E)-4-hydroxy-3-methylbut-2-enyl diphosphate. Cys-206 is a binding site for [4Fe-4S] cluster. (2E)-4-hydroxy-3-methylbut-2-enyl diphosphate-binding residues include Ser-234, Ser-235, Asn-236, and Ser-278. Dimethylallyl diphosphate-binding residues include Ser-234, Ser-235, Asn-236, and Ser-278. The isopentenyl diphosphate site is built by Ser-234, Ser-235, Asn-236, and Ser-278.

The protein belongs to the IspH family. [4Fe-4S] cluster serves as cofactor.

It carries out the reaction isopentenyl diphosphate + 2 oxidized [2Fe-2S]-[ferredoxin] + H2O = (2E)-4-hydroxy-3-methylbut-2-enyl diphosphate + 2 reduced [2Fe-2S]-[ferredoxin] + 2 H(+). It catalyses the reaction dimethylallyl diphosphate + 2 oxidized [2Fe-2S]-[ferredoxin] + H2O = (2E)-4-hydroxy-3-methylbut-2-enyl diphosphate + 2 reduced [2Fe-2S]-[ferredoxin] + 2 H(+). It functions in the pathway isoprenoid biosynthesis; dimethylallyl diphosphate biosynthesis; dimethylallyl diphosphate from (2E)-4-hydroxy-3-methylbutenyl diphosphate: step 1/1. It participates in isoprenoid biosynthesis; isopentenyl diphosphate biosynthesis via DXP pathway; isopentenyl diphosphate from 1-deoxy-D-xylulose 5-phosphate: step 6/6. In terms of biological role, catalyzes the conversion of 1-hydroxy-2-methyl-2-(E)-butenyl 4-diphosphate (HMBPP) into a mixture of isopentenyl diphosphate (IPP) and dimethylallyl diphosphate (DMAPP). Acts in the terminal step of the DOXP/MEP pathway for isoprenoid precursor biosynthesis. This chain is 4-hydroxy-3-methylbut-2-enyl diphosphate reductase, found in Shewanella oneidensis (strain ATCC 700550 / JCM 31522 / CIP 106686 / LMG 19005 / NCIMB 14063 / MR-1).